The primary structure comprises 923 residues: Progesterone receptor (923 aa).

Residues M1–T11 show a composition bias toward basic and acidic residues. The tract at residues M1–V49 is disordered. An AF3; mediates transcriptional activation (in isoform B) region spans residues M1–L164. Residues M1–I556 are modulating, Pro-Rich. K7 participates in a covalent cross-link: Glycyl lysine isopeptide (Lys-Gly) (interchain with G-Cter in SUMO). Position 20 is a phosphoserine (S20). The segment covering Q38–V49 has biased composition (polar residues). The short motif at L56–L60 is the LXXL motif 1 element. The tract at residues A67–L111 is disordered. At S82 the chain carries Phosphoserine. The short motif at L115–L119 is the LXXL motif 2 element. Phosphoserine is present on residues S130 and S162. The interval R152 to S239 is disordered. A mediates transcriptional transrepression (in isoform A) region spans residues M165 to H304. A Nuclear localization signal motif is present at residues V184–A188. Phosphoserine is present on residues S190 and S213. A Phosphoserine; by MAPK1 modification is found at S293. Positions A333–D371 are disordered. Residues F338 to P353 show a composition bias toward pro residues. At S344 the chain carries Phosphoserine; by MAPK. K387 is covalently cross-linked (Glycyl lysine isopeptide (Lys-Gly) (interchain with G-Cter in SUMO); alternate). K387 participates in a covalent cross-link: Glycyl lysine isopeptide (Lys-Gly) (interchain with G-Cter in ubiquitin); alternate. S399 bears the Phosphoserine; by CDK2 mark. Positions T412–V435 are disordered. The span at F416 to R429 shows a compositional bias: pro residues. Residues S450–R536 form an AF1; mediates transcriptional activation region. K521 is covalently cross-linked (Glycyl lysine isopeptide (Lys-Gly) (interchain with G-Cter in SUMO)). 2 NR C4-type zinc fingers span residues C557–C577 and C593–C617. The segment at residues C557–F629 is a DNA-binding region (nuclear receptor). Residue S666 is modified to Phosphoserine. Residues Q669–I903 enclose the NR LBD domain. Residues L677–K923 form an AF2; mediates transcriptional activation region. Residue R756 coordinates progesterone.

The protein belongs to the nuclear hormone receptor family. NR3 subfamily. As to quaternary structure, interacts with SMARD1 and UNC45A. Interacts with CUEDC2; the interaction promotes ubiquitination, decreases sumoylation, and represses transcriptional activity. Interacts with PIAS3; the interaction promotes sumoylation of PR in a hormone-dependent manner, inhibits DNA-binding, and alters nuclear export. Interacts with SP1; the interaction requires ligand-induced phosphorylation on Ser-344. Interacts with PRMT2. Isoform A interacts with NCOR2. Isoform B (but not isoform A) interacts with NCOA2 and NCOA1. Isoform B (but not isoform A) interacts with KLF9. Interacts with GTF2B. In terms of processing, phosphorylated on multiple serine sites. Several of these sites are hormone-dependent. Phosphorylation on Ser-293 is highly hormone-dependent and modulates ubiquitination and sumoylation on Lys-387. Phosphorylation on Ser-344 also requires induction by hormone. Basal phosphorylation on Ser-82, Ser-190 and Ser-399 is increased in response to progesterone and can be phosphorylated in vitro by the CDK2-A1 complex. Increased levels of phosphorylation on Ser-399 also in the presence of EGF, heregulin, IGF, PMA and FBS. Phosphorylation at this site by CDK2 is ligand-independent, and increases nuclear translocation and transcriptional activity. Phosphorylation at Ser-293, but not at Ser-190, is impaired during the G(2)/M phase of the cell cycle. Phosphorylation on Ser-344 by ERK1/2 MAPK is required for interaction with SP1. Sumoylation is hormone-dependent and represses transcriptional activity. Sumoylation on all three sites is enhanced by PIAS3. Desumoylated by SENP1. Sumoylation on Lys-387, the main site of sumoylation, is repressed by ubiquitination on the same site, and modulated by phosphorylation at Ser-293. Post-translationally, ubiquitination is hormone-dependent and represses sumoylation on the same site. Promoted by MAPK-mediated phosphorylation on Ser-293. Ubiquitinated by UBR5, leading to its degradation: UBR5 specifically recognizes and binds ligand-bound PGR when it is not associated with coactivators (NCOAs). In presence of NCOAs, the UBR5-degron is not accessible, preventing its ubiquitination and degradation. In terms of processing, palmitoylated by ZDHHC7 and ZDHHC21. Palmitoylation is required for plasma membrane targeting and for rapid intracellular signaling via ERK and AKT kinases and cAMP generation. Isoform A and isoform B are expressed in the pituitary.

The protein localises to the nucleus. It is found in the cytoplasm. Functionally, the steroid hormones and their receptors are involved in the regulation of eukaryotic gene expression and affect cellular proliferation and differentiation in target tissues. Depending on the isoform, progesterone receptor functions as a transcriptional activator or repressor. In terms of biological role, ligand-dependent transdominant repressor of steroid hormone receptor transcriptional activity including repression of its isoform B, MR and ER. Transrepressional activity may involve recruitment of corepressor NCOR2. Its function is as follows. Transcriptional activator of several progesteron-dependent promoters in a variety of cell types. Involved in activation of SRC-dependent MAPK signaling on hormone stimulation. This chain is Progesterone receptor (Pgr), found in Rattus norvegicus (Rat).